A 194-amino-acid chain; its full sequence is Glycerol-3-phosphate acyltransferase (194 aa).

6 helical membrane passes run 3–23, 52–72, 80–100, 112–132, 135–155, and 162–182; these read AGLFWIAGAYLLGSIPTGLLL, VGILTLTGDCLKGLLPVLLAW, MQAWVGLAAFCGHVFSVFLLF, VFLALAPLAVLGALAVFILLV, WRYISLGSIMAAAVMPLIIFF, and LLIATVLIAAVVIIKHHSNIS.

This sequence belongs to the PlsY family. In terms of assembly, probably interacts with PlsX.

The protein localises to the cell inner membrane. The enzyme catalyses an acyl phosphate + sn-glycerol 3-phosphate = a 1-acyl-sn-glycero-3-phosphate + phosphate. It functions in the pathway lipid metabolism; phospholipid metabolism. Functionally, catalyzes the transfer of an acyl group from acyl-phosphate (acyl-PO(4)) to glycerol-3-phosphate (G3P) to form lysophosphatidic acid (LPA). This enzyme utilizes acyl-phosphate as fatty acyl donor, but not acyl-CoA or acyl-ACP. The polypeptide is Glycerol-3-phosphate acyltransferase (Trichlorobacter lovleyi (strain ATCC BAA-1151 / DSM 17278 / SZ) (Geobacter lovleyi)).